The following is a 256-amino-acid chain: 4-hydroxy-tetrahydrodipicolinate reductase (256 aa).

8 to 13 (GATGRV) provides a ligand contact to NAD(+). K36 lines the NADP(+) pocket. NAD(+) contacts are provided by residues 89-91 (GTT) and 113-116 (ATNM). Catalysis depends on H145, which acts as the Proton donor/acceptor. H146 provides a ligand contact to (S)-2,3,4,5-tetrahydrodipicolinate. K149 serves as the catalytic Proton donor. (S)-2,3,4,5-tetrahydrodipicolinate is bound at residue 155–156 (GT).

The protein belongs to the DapB family.

The protein resides in the cytoplasm. The enzyme catalyses (S)-2,3,4,5-tetrahydrodipicolinate + NAD(+) + H2O = (2S,4S)-4-hydroxy-2,3,4,5-tetrahydrodipicolinate + NADH + H(+). It catalyses the reaction (S)-2,3,4,5-tetrahydrodipicolinate + NADP(+) + H2O = (2S,4S)-4-hydroxy-2,3,4,5-tetrahydrodipicolinate + NADPH + H(+). It functions in the pathway amino-acid biosynthesis; L-lysine biosynthesis via DAP pathway; (S)-tetrahydrodipicolinate from L-aspartate: step 4/4. In terms of biological role, catalyzes the conversion of 4-hydroxy-tetrahydrodipicolinate (HTPA) to tetrahydrodipicolinate. The protein is 4-hydroxy-tetrahydrodipicolinate reductase of Wolinella succinogenes (strain ATCC 29543 / DSM 1740 / CCUG 13145 / JCM 31913 / LMG 7466 / NCTC 11488 / FDC 602W) (Vibrio succinogenes).